The following is a 1237-amino-acid chain: GTPase activating protein BUD2 (1237 aa).

The span at 79–110 (GSGKSSISQPPPTTSTRRNLLRKSSNLNSSDQ) shows a compositional bias: low complexity. The disordered stretch occupies residues 79-124 (GSGKSSISQPPPTTSTRRNLLRKSSNLNSSDQSHSKSSEDNEHQPP). Basic and acidic residues predominate over residues 111-121 (SHSKSSEDNEH). A C2 domain is found at 381–503 (NVEHPQLYDF…KQIKTTSTIM (123 aa)). One can recognise a Ras-GAP domain in the interval 637-905 (NSQDQAVSNS…PEIYDYFDKL (269 aa)). Disordered stretches follow at residues 721–762 (SIHE…ERER) and 969–1007 (NNNG…PDLD). Residues 735 to 754 (DVSDDDDDDDDNSSDDDADY) are compositionally biased toward acidic residues. Residues 986–996 (RDMEREQDRSR) show a composition bias toward basic and acidic residues. Residues 1065–1093 (NITLKDIQKQSTKIMNKIQELEIYLENYE) adopt a coiled-coil conformation. The tract at residues 1170–1204 (NGGMGNRNGHDVNGHNNNNNNNNNNTGDGYNETDR) is disordered. Residues 1183-1199 (GHNNNNNNNNNNTGDGY) are compositionally biased toward low complexity.

The protein resides in the cytoplasm. It localises to the cell cortex. The protein localises to the cell tip. It is found in the cell septum. In terms of biological role, GTPase activating protein (GAP) for RSR1 which is involved in the polarization of yeast and hyphal cells. Directs the site of new daughter cell growth in yeast and hyphal cells. Important for hyphae to maintain linear growth and necessary for hyphal responses to directional cues in the environment (tropisms). Required for correct localization of the septin rings and stabilization of the polarisome at hyphal tips. Involved in cell adhesion. This is GTPase activating protein BUD2 (BUD2) from Candida albicans (strain SC5314 / ATCC MYA-2876) (Yeast).